A 253-amino-acid chain; its full sequence is uncharacterized protein (253 aa).

Residues 62 to 78 (WCSIGWSIGALIIFLVY) traverse the membrane as a helical segment. The span at 141–158 (TTPQTTTPEIPSSTEPQE) shows a compositional bias: low complexity. Positions 141–225 (TTPQTTTPEI…HDNQPLEERH (85 aa)) are disordered. Residues 200–216 (NVEDEPPPNKPEEEEDH) are compositionally biased toward acidic residues.

It localises to the host membrane. This is an uncharacterized protein from Aedes vexans (Inland floodwater mosquito).